A 230-amino-acid chain; its full sequence is Ion-translocating oxidoreductase complex subunit E (230 aa).

The next 5 membrane-spanning stretches (helical) occupy residues 39 to 59 (LGLG…VSLV), 69 to 89 (IPVF…LMNA), 93 to 113 (GLYL…IIIG), 124 to 144 (VLPA…VLVV), and 182 to 202 (AFLL…LIAA).

Belongs to the NqrDE/RnfAE family. The complex is composed of six subunits: RnfA, RnfB, RnfC, RnfD, RnfE and RnfG.

Its subcellular location is the cell inner membrane. Its function is as follows. Part of a membrane-bound complex that couples electron transfer with translocation of ions across the membrane. The polypeptide is Ion-translocating oxidoreductase complex subunit E (Vibrio cholerae serotype O1 (strain ATCC 39315 / El Tor Inaba N16961)).